Reading from the N-terminus, the 372-residue chain is Cell division protein FtsZ 1 (372 aa).

Residues 51–55 (GAGCN), 138–140 (GTG), Glu169, Arg173, and Asp216 each bind GTP. The interval 351–372 (QEETPEPSEEEVPPVKIDIPEL) is disordered. The segment covering 353–362 (ETPEPSEEEV) has biased composition (acidic residues).

The protein belongs to the FtsZ family. Homodimer. Polymerizes to form a dynamic ring structure in a strictly GTP-dependent manner. Interacts directly with several other division proteins.

It localises to the cytoplasm. Essential cell division protein that forms a contractile ring structure (Z ring) at the future cell division site. The regulation of the ring assembly controls the timing and the location of cell division. One of the functions of the FtsZ ring is to recruit other cell division proteins to the septum to produce a new cell wall between the dividing cells. Binds GTP and shows GTPase activity. The sequence is that of Cell division protein FtsZ 1 from Pyrococcus abyssi (strain GE5 / Orsay).